Consider the following 596-residue polypeptide: Aspartate--tRNA(Asp/Asn) ligase (596 aa).

Residue E175 coordinates L-aspartate. The interval 199 to 202 (QQYK) is aspartate. Residues R221 and H454 each coordinate L-aspartate. Residue 221 to 223 (RDE) coordinates ATP. E488 is an ATP binding site. L-aspartate is bound at residue R495. Residue 540 to 543 (GVDR) participates in ATP binding.

Belongs to the class-II aminoacyl-tRNA synthetase family. Type 1 subfamily. In terms of assembly, homodimer.

The protein resides in the cytoplasm. It catalyses the reaction tRNA(Asx) + L-aspartate + ATP = L-aspartyl-tRNA(Asx) + AMP + diphosphate. In terms of biological role, aspartyl-tRNA synthetase with relaxed tRNA specificity since it is able to aspartylate not only its cognate tRNA(Asp) but also tRNA(Asn). Reaction proceeds in two steps: L-aspartate is first activated by ATP to form Asp-AMP and then transferred to the acceptor end of tRNA(Asp/Asn). This chain is Aspartate--tRNA(Asp/Asn) ligase, found in Bartonella bacilliformis (strain ATCC 35685 / KC583 / Herrer 020/F12,63).